The primary structure comprises 573 residues: ATP-dependent RNA helicase RhlB (573 aa).

A Q motif motif is present at residues 9–37; sequence LTFSSFDLHPALVAGLESAGFTRCTPIQA. Positions 40–220 constitute a Helicase ATP-binding domain; sequence LPVALPGGDV…YEHMNEPEKL (181 aa). 53–60 is a binding site for ATP; the sequence is AQTGTGKT. Residues 166–169 carry the DEAD box motif; the sequence is DEAD. The 163-residue stretch at 231-393 folds into the Helicase C-terminal domain; it reads RVRQRIYFPS…PVTTELLTPL (163 aa). Over residues 391 to 400 the composition is skewed to low complexity; that stretch reads TPLPRTPRAT. Positions 391-559 are disordered; sequence TPLPRTPRAT…AKPSGSPSLL (169 aa). The segment covering 402–411 has biased composition (acidic residues); that stretch reads EGEEVDDDAG. Residues 419–432 are compositionally biased toward basic and acidic residues; it reads REAREQRAADEARR. Over residues 435 to 449 the composition is skewed to gly residues; the sequence is GRSGPGGASRSGSGG. Residues 450-461 are compositionally biased toward basic and acidic residues; sequence GRRDGAGADGKP. Positions 476 to 499 are enriched in low complexity; sequence PAAAPSETPVVVAAAAETPAVTAA. A compositionally biased stretch (basic residues) spans 505-514; sequence PRKRRRRRNG. 2 stretches are compositionally biased toward low complexity: residues 516–528 and 541–559; these read PVEG…ASTP and VVAK…PSLL.

The protein belongs to the DEAD box helicase family. RhlB subfamily. As to quaternary structure, component of the RNA degradosome, which is a multiprotein complex involved in RNA processing and mRNA degradation.

Its subcellular location is the cytoplasm. It catalyses the reaction ATP + H2O = ADP + phosphate + H(+). Functionally, DEAD-box RNA helicase involved in RNA degradation. Has RNA-dependent ATPase activity and unwinds double-stranded RNA. This is ATP-dependent RNA helicase RhlB from Xanthomonas campestris pv. campestris (strain B100).